The following is a 102-amino-acid chain: NADH-quinone oxidoreductase subunit K (102 aa).

The next 3 helical transmembrane spans lie at L5–L25, I31–F51, and V62–L82.

The protein belongs to the complex I subunit 4L family. As to quaternary structure, NDH-1 is composed of 14 different subunits. Subunits NuoA, H, J, K, L, M, N constitute the membrane sector of the complex.

It localises to the cell inner membrane. The catalysed reaction is a quinone + NADH + 5 H(+)(in) = a quinol + NAD(+) + 4 H(+)(out). Its function is as follows. NDH-1 shuttles electrons from NADH, via FMN and iron-sulfur (Fe-S) centers, to quinones in the respiratory chain. The immediate electron acceptor for the enzyme in this species is believed to be ubiquinone. Couples the redox reaction to proton translocation (for every two electrons transferred, four hydrogen ions are translocated across the cytoplasmic membrane), and thus conserves the redox energy in a proton gradient. This chain is NADH-quinone oxidoreductase subunit K, found in Bordetella parapertussis (strain 12822 / ATCC BAA-587 / NCTC 13253).